A 219-amino-acid polypeptide reads, in one-letter code: Uracil-DNA glycosylase (219 aa).

The Proton acceptor role is filled by aspartate 61.

It belongs to the uracil-DNA glycosylase (UDG) superfamily. UNG family.

Its subcellular location is the cytoplasm. It catalyses the reaction Hydrolyzes single-stranded DNA or mismatched double-stranded DNA and polynucleotides, releasing free uracil.. In terms of biological role, excises uracil residues from the DNA which can arise as a result of misincorporation of dUMP residues by DNA polymerase or due to deamination of cytosine. The polypeptide is Uracil-DNA glycosylase (Neisseria meningitidis serogroup B (strain ATCC BAA-335 / MC58)).